Reading from the N-terminus, the 319-residue chain is 4-hydroxy-3-methylbut-2-enyl diphosphate reductase (319 aa).

Residue Cys-12 coordinates [4Fe-4S] cluster. Positions 41 and 74 each coordinate (2E)-4-hydroxy-3-methylbut-2-enyl diphosphate. Positions 41 and 74 each coordinate dimethylallyl diphosphate. Isopentenyl diphosphate contacts are provided by His-41 and His-74. A [4Fe-4S] cluster-binding site is contributed by Cys-97. A (2E)-4-hydroxy-3-methylbut-2-enyl diphosphate-binding site is contributed by His-125. His-125 contributes to the dimethylallyl diphosphate binding site. His-125 is a binding site for isopentenyl diphosphate. Catalysis depends on Glu-127, which acts as the Proton donor. Residue Thr-168 coordinates (2E)-4-hydroxy-3-methylbut-2-enyl diphosphate. Cys-198 contacts [4Fe-4S] cluster. (2E)-4-hydroxy-3-methylbut-2-enyl diphosphate-binding residues include Ser-226, Ser-227, Asn-228, and Ser-270. Dimethylallyl diphosphate contacts are provided by Ser-226, Ser-227, Asn-228, and Ser-270. Residues Ser-226, Ser-227, Asn-228, and Ser-270 each contribute to the isopentenyl diphosphate site.

Belongs to the IspH family. Homodimer. [4Fe-4S] cluster serves as cofactor.

It carries out the reaction isopentenyl diphosphate + 2 oxidized [2Fe-2S]-[ferredoxin] + H2O = (2E)-4-hydroxy-3-methylbut-2-enyl diphosphate + 2 reduced [2Fe-2S]-[ferredoxin] + 2 H(+). The enzyme catalyses dimethylallyl diphosphate + 2 oxidized [2Fe-2S]-[ferredoxin] + H2O = (2E)-4-hydroxy-3-methylbut-2-enyl diphosphate + 2 reduced [2Fe-2S]-[ferredoxin] + 2 H(+). It participates in isoprenoid biosynthesis; dimethylallyl diphosphate biosynthesis; dimethylallyl diphosphate from (2E)-4-hydroxy-3-methylbutenyl diphosphate: step 1/1. The protein operates within isoprenoid biosynthesis; isopentenyl diphosphate biosynthesis via DXP pathway; isopentenyl diphosphate from 1-deoxy-D-xylulose 5-phosphate: step 6/6. In terms of biological role, catalyzes the conversion of 1-hydroxy-2-methyl-2-(E)-butenyl 4-diphosphate (HMBPP) into a mixture of isopentenyl diphosphate (IPP) and dimethylallyl diphosphate (DMAPP). Acts in the terminal step of the DOXP/MEP pathway for isoprenoid precursor biosynthesis. This Hamiltonella defensa subsp. Acyrthosiphon pisum (strain 5AT) protein is 4-hydroxy-3-methylbut-2-enyl diphosphate reductase.